We begin with the raw amino-acid sequence, 417 residues long: Gamma-glutamyl phosphate reductase (417 aa).

The protein belongs to the gamma-glutamyl phosphate reductase family.

Its subcellular location is the cytoplasm. The catalysed reaction is L-glutamate 5-semialdehyde + phosphate + NADP(+) = L-glutamyl 5-phosphate + NADPH + H(+). The protein operates within amino-acid biosynthesis; L-proline biosynthesis; L-glutamate 5-semialdehyde from L-glutamate: step 2/2. Its function is as follows. Catalyzes the NADPH-dependent reduction of L-glutamate 5-phosphate into L-glutamate 5-semialdehyde and phosphate. The product spontaneously undergoes cyclization to form 1-pyrroline-5-carboxylate. This is Gamma-glutamyl phosphate reductase from Klebsiella pneumoniae (strain 342).